Here is a 527-residue protein sequence, read N- to C-terminus: uncharacterized protein (527 aa).

This is an uncharacterized protein from Schizosaccharomyces pombe (strain 972 / ATCC 24843) (Fission yeast).